Here is a 275-residue protein sequence, read N- to C-terminus: Elongation factor Ts (275 aa).

An involved in Mg(2+) ion dislocation from EF-Tu region spans residues 76–79 (TDFV).

It belongs to the EF-Ts family.

The protein resides in the cytoplasm. In terms of biological role, associates with the EF-Tu.GDP complex and induces the exchange of GDP to GTP. It remains bound to the aminoacyl-tRNA.EF-Tu.GTP complex up to the GTP hydrolysis stage on the ribosome. The chain is Elongation factor Ts from Corynebacterium glutamicum (strain R).